The sequence spans 100 residues: Small ribosomal subunit protein uS14c (100 aa).

A disordered region spans residues 1–31; sequence MAKKSLIQREKKRQKLEQKYHSIRRSSKKEI.

Belongs to the universal ribosomal protein uS14 family. Part of the 30S ribosomal subunit.

It is found in the plastid. Its subcellular location is the chloroplast. In terms of biological role, binds 16S rRNA, required for the assembly of 30S particles. The sequence is that of Small ribosomal subunit protein uS14c from Atropa belladonna (Belladonna).